We begin with the raw amino-acid sequence, 294 residues long: Proline iminopeptidase (294 aa).

The AB hydrolase-1 domain occupies 28–278 (PLLLLHGGPG…GCGHMPFVQE (251 aa)). The active-site Nucleophile is S106. Residue D245 is part of the active site. H272 serves as the catalytic Proton donor.

The protein belongs to the peptidase S33 family. In terms of assembly, homotrimer.

It is found in the cell envelope. The catalysed reaction is Release of N-terminal proline from a peptide.. Its activity is regulated as follows. Inhibited by 3,4-DCI, but no significant effect on enzyme activity by pepstatin A, E-64, 1,10-phenanthroline or EDTA. Its function is as follows. Releases the N-terminal proline from various substrates. Cleaves Pro-betaNA (L-prolyl-beta-naphthylamide) effectively. The sequence is that of Proline iminopeptidase (pip) from Lactobacillus delbrueckii subsp. lactis.